The primary structure comprises 289 residues: Oxaloacetate decarboxylase (289 aa).

A substrate-binding site is contributed by serine 50. A Mg(2+)-binding site is contributed by aspartate 88. Substrate contacts are provided by arginine 159 and histidine 235.

The protein belongs to the isocitrate lyase/PEP mutase superfamily. Oxaloacetate decarboxylase family. Homotetramer; dimer of dimers. Requires Mg(2+) as cofactor.

The catalysed reaction is oxaloacetate + H(+) = pyruvate + CO2. Functionally, catalyzes the decarboxylation of oxaloacetate into pyruvate. Seems to play a role in maintaining cellular concentrations of bicarbonate and pyruvate. This chain is Oxaloacetate decarboxylase, found in Pseudomonas putida (strain ATCC 47054 / DSM 6125 / CFBP 8728 / NCIMB 11950 / KT2440).